A 528-amino-acid polypeptide reads, in one-letter code: Nucleoporin ASM4 (528 aa).

Residues 2 to 3 (FG) form an FG 1 repeat. Residues 23–50 (TTQMFQSQSQLQPQPQPQPQQQQQHLQF) show a composition bias toward low complexity. Disordered regions lie at residues 23 to 64 (TTQM…FGNS) and 88 to 144 (IKNG…SMNA). 2 stretches are compositionally biased toward polar residues: residues 51-64 (NGSS…FGNS) and 97-108 (QHGQGNNPSWVN). The stretch at 61-62 (FG) is one FG 2 repeat. Residues 110–125 (PKKRFTPHTVIRRKTT) show a composition bias toward basic residues. Low complexity predominate over residues 127-141 (QNSSSDINQNDDSSS). 3 FG repeats span residues 195 to 196 (FG), 274 to 275 (FG), and 291 to 292 (FG). The region spanning 265–394 (SSSLSAIIVF…IPYSKNAVEQ (130 aa)) is the RRM Nup35-type domain. Phosphoserine occurs at positions 458 and 464. Positions 490 to 510 (NLLRNLESKMRQQEAKYRNNE) form a coiled coil. Residues 523 to 524 (FG) form an FG 6 repeat.

As to quaternary structure, component of the nuclear pore complex (NPC). NPC constitutes the exclusive means of nucleocytoplasmic transport. NPCs allow the passive diffusion of ions and small molecules and the active, nuclear transport receptor-mediated bidirectional transport of macromolecules such as proteins, RNAs, ribonucleoparticles (RNPs), and ribosomal subunits across the nuclear envelope. Due to its 8-fold rotational symmetry, all subunits are present with 8 copies or multiples thereof. ASM4 may form a subcomplex with NUP53, NDC1, and NUP170. Post-translationally, phosphorylated by CDC28.

The protein localises to the nucleus. It localises to the nuclear pore complex. It is found in the nucleus membrane. Its function is as follows. Functions as a component of the nuclear pore complex (NPC). NPC components, collectively referred to as nucleoporins (NUPs), can play the role of both NPC structural components and of docking or interaction partners for transiently associated nuclear transport factors. Active directional transport is assured by both, a Phe-Gly (FG) repeat affinity gradient for these transport factors across the NPC and a transport cofactor concentration gradient across the nuclear envelope (GSP1 and GSP2 GTPases associated predominantly with GTP in the nucleus, with GDP in the cytoplasm). May have a mitosis control function. The protein is Nucleoporin ASM4 (ASM4) of Saccharomyces cerevisiae (strain ATCC 204508 / S288c) (Baker's yeast).